Reading from the N-terminus, the 130-residue chain is Small ribosomal subunit protein uS9 (130 aa).

It belongs to the universal ribosomal protein uS9 family.

The sequence is that of Small ribosomal subunit protein uS9 from Burkholderia cenocepacia (strain HI2424).